The sequence spans 399 residues: F420-dependent formate dehydrogenase subunit beta (399 aa).

2 consecutive 4Fe-4S ferredoxin-type domains span residues 287–307 (TEYMDDFSRCLKCYGCREACP) and 339–367 (ERMLHMVESCTNCGQCEEVCPGEIPLAKI). Residues cysteine 296, cysteine 299, cysteine 302, cysteine 306, cysteine 348, cysteine 351, cysteine 354, and cysteine 358 each contribute to the [4Fe-4S] cluster site.

Belongs to the FrhB family. Dimer of an alpha (FdhA) and a beta (FdhB) subunit. It depends on [4Fe-4S] cluster as a cofactor. Requires FAD as cofactor. Zn(2+) is required as a cofactor.

It catalyses the reaction oxidized coenzyme F420-(gamma-L-Glu)(n) + formate + 2 H(+) = reduced coenzyme F420-(gamma-L-Glu)(n) + CO2. With respect to regulation, is extremely sensitive to oxygen. Contains a FAD that is required for coenzyme F420-dependent activity but not for methyl viologen-dependent activity. Preincubation of the FAD-depleted enzyme with FAD restores coenzyme F420-dependent activity. Neither FMN nor FADH2 can replace FAD. Strongly inhibited by cyanide, azide, alpha,alpha-dipyridyl and 1,10-phenanthroline. Its function is as follows. Catalyzes the oxidation of formate to carbon dioxide, with coenzyme F420 as the electron acceptor. In vitro can also use methyl viologen, 7,8-didemethyl-8-hydroxy-5-deazariboflavin (or FO, a hydrolytic derivative of coenzyme F420), FMN and FAD as electron acceptors, but not NAD(+) or NADP(+). The chain is F420-dependent formate dehydrogenase subunit beta from Methanobacterium formicicum.